We begin with the raw amino-acid sequence, 303 residues long: MTTIESQCSIDGILLLNKPQGMTSNAALQKTKHLFGAKKAGHTGSLDPLATGMLPLCFGEATKICQYLLNADKSYETIGRLGIKTNTADCTGEVIFCIENYTVSHEEMIATLEKYKGKIKQIPSMFSALKHKGTPLYRLAREGIEIERKARDIVISQLNLEQFDGECFTLTVSCSKGTYIRNLVEDIGDTLKAGAHMTKLHRLYTAGFENNRMYTLDELQDMPLSQRLACLIPIDQAVQHLTPVILSDSEVTAIRQGKVISNKTGAVEGEDLRLYGEQSQFIGIGQALIHGDIKAKRLVSFAL.

D47 serves as the catalytic Nucleophile.

Belongs to the pseudouridine synthase TruB family. Type 1 subfamily.

The enzyme catalyses uridine(55) in tRNA = pseudouridine(55) in tRNA. Responsible for synthesis of pseudouridine from uracil-55 in the psi GC loop of transfer RNAs. This is tRNA pseudouridine synthase B from Legionella pneumophila subsp. pneumophila (strain Philadelphia 1 / ATCC 33152 / DSM 7513).